The sequence spans 379 residues: Succinyl-diaminopimelate desuccinylase (379 aa).

Position 68 (His-68) interacts with Zn(2+). Residue Asp-70 is part of the active site. Residue Asp-101 participates in Zn(2+) binding. The active-site Proton acceptor is Glu-134. Residues Glu-135, Glu-163, and His-352 each contribute to the Zn(2+) site.

Belongs to the peptidase M20A family. DapE subfamily. In terms of assembly, homodimer. Zn(2+) serves as cofactor. Co(2+) is required as a cofactor.

The enzyme catalyses N-succinyl-(2S,6S)-2,6-diaminopimelate + H2O = (2S,6S)-2,6-diaminopimelate + succinate. The protein operates within amino-acid biosynthesis; L-lysine biosynthesis via DAP pathway; LL-2,6-diaminopimelate from (S)-tetrahydrodipicolinate (succinylase route): step 3/3. Functionally, catalyzes the hydrolysis of N-succinyl-L,L-diaminopimelic acid (SDAP), forming succinate and LL-2,6-diaminopimelate (DAP), an intermediate involved in the bacterial biosynthesis of lysine and meso-diaminopimelic acid, an essential component of bacterial cell walls. The polypeptide is Succinyl-diaminopimelate desuccinylase (Dinoroseobacter shibae (strain DSM 16493 / NCIMB 14021 / DFL 12)).